Here is a 145-residue protein sequence, read N- to C-terminus: D-aminoacyl-tRNA deacylase (145 aa).

Positions 137-138 (GP) match the Gly-cisPro motif, important for rejection of L-amino acids motif.

The protein belongs to the DTD family. As to quaternary structure, homodimer.

It localises to the cytoplasm. It catalyses the reaction glycyl-tRNA(Ala) + H2O = tRNA(Ala) + glycine + H(+). The catalysed reaction is a D-aminoacyl-tRNA + H2O = a tRNA + a D-alpha-amino acid + H(+). Its function is as follows. An aminoacyl-tRNA editing enzyme that deacylates mischarged D-aminoacyl-tRNAs. Also deacylates mischarged glycyl-tRNA(Ala), protecting cells against glycine mischarging by AlaRS. Acts via tRNA-based rather than protein-based catalysis; rejects L-amino acids rather than detecting D-amino acids in the active site. By recycling D-aminoacyl-tRNA to D-amino acids and free tRNA molecules, this enzyme counteracts the toxicity associated with the formation of D-aminoacyl-tRNA entities in vivo and helps enforce protein L-homochirality. The chain is D-aminoacyl-tRNA deacylase from Dinoroseobacter shibae (strain DSM 16493 / NCIMB 14021 / DFL 12).